A 344-amino-acid polypeptide reads, in one-letter code: Heat-inducible transcription repressor HrcA (344 aa).

The protein belongs to the HrcA family.

Functionally, negative regulator of class I heat shock genes (grpE-dnaK-dnaJ and groELS operons). Prevents heat-shock induction of these operons. The sequence is that of Heat-inducible transcription repressor HrcA from Corynebacterium aurimucosum (strain ATCC 700975 / DSM 44827 / CIP 107346 / CN-1) (Corynebacterium nigricans).